A 350-amino-acid polypeptide reads, in one-letter code: tRNA uridine(34) hydroxylase (350 aa).

The Rhodanese domain occupies 146–240; that stretch reads DDPDAVFIDM…YARRAREQGL (95 aa). Catalysis depends on cysteine 200, which acts as the Cysteine persulfide intermediate. A compositionally biased stretch (basic and acidic residues) spans 319–328; it reads RRRRAGRENG. The segment at 319 to 350 is disordered; that stretch reads RRRRAGRENGNKIFNKSRGRLNSKLSIPDPAE.

This sequence belongs to the TrhO family.

The catalysed reaction is uridine(34) in tRNA + AH2 + O2 = 5-hydroxyuridine(34) in tRNA + A + H2O. In terms of biological role, catalyzes oxygen-dependent 5-hydroxyuridine (ho5U) modification at position 34 in tRNAs. This is tRNA uridine(34) hydroxylase from Salmonella schwarzengrund (strain CVM19633).